Here is a 312-residue protein sequence, read N- to C-terminus: DNA-directed RNA polymerase subunit alpha (312 aa).

Residues 1–229 (MLQYQIDRIE…ELFQPLATVT (229 aa)) form an alpha N-terminal domain (alpha-NTD) region. The segment at 246–312 (IPLEELNLSV…ISIPQSRTSA (67 aa)) is alpha C-terminal domain (alpha-CTD).

It belongs to the RNA polymerase alpha chain family. As to quaternary structure, in cyanobacteria the RNAP catalytic core is composed of 2 alpha, 1 beta, 1 beta', 1 gamma and 1 omega subunit. When a sigma factor is associated with the core the holoenzyme is formed, which can initiate transcription.

It catalyses the reaction RNA(n) + a ribonucleoside 5'-triphosphate = RNA(n+1) + diphosphate. Its function is as follows. DNA-dependent RNA polymerase catalyzes the transcription of DNA into RNA using the four ribonucleoside triphosphates as substrates. This chain is DNA-directed RNA polymerase subunit alpha, found in Parasynechococcus marenigrum (strain WH8102).